Here is a 285-residue protein sequence, read N- to C-terminus: HTH-type transcriptional regulator YofA (285 aa).

The region spanning 1–58 is the HTH lysR-type domain; the sequence is MESGDLKIFQAVAREGSITKAAQMLNYVQSNVTARVHNLEEDLNIRLFHRTNRGMKLT. The segment at residues 18–37 is a DNA-binding region (H-T-H motif); that stretch reads ITKAAQMLNYVQSNVTARVH.

This sequence belongs to the LysR transcriptional regulatory family.

It is found in the cytoplasm. In terms of biological role, regulates expression of the cell division protein ftsW, and is essential for cell viability during stationary phase. This chain is HTH-type transcriptional regulator YofA (yofA), found in Bacillus subtilis (strain 168).